The sequence spans 356 residues: OVARIAN TUMOR DOMAIN-containing deubiquitinating enzyme 10 (356 aa).

The interval 86–117 is disordered; the sequence is DYSHQNQQQQHQQEGYTNNYSNNNNGYAWNDQ. A compositionally biased stretch (low complexity) spans 89–115; it reads HQNQQQQHQQEGYTNNYSNNNNGYAWN. One can recognise an OTU domain in the interval 213–337; the sequence is FTEVKVPGDG…EVHYNAIYLN (125 aa). Aspartate 221 is a catalytic residue. The Nucleophile role is filled by cysteine 224. Residue histidine 330 is part of the active site.

This sequence belongs to the peptidase C85 family.

The enzyme catalyses Thiol-dependent hydrolysis of ester, thioester, amide, peptide and isopeptide bonds formed by the C-terminal Gly of ubiquitin (a 76-residue protein attached to proteins as an intracellular targeting signal).. Functionally, hydrolase that can remove conjugated ubiquitin from proteins in vitro and may therefore play an important regulatory role at the level of protein turnover by preventing degradation. Cysteine protease with a preference for 'Lys-63' over 'Lys-48' over 'Met-1' -linked ubiquitin (UB) tetramers as substrates. Also cleaves RUB-GST fusion. The protein is OVARIAN TUMOR DOMAIN-containing deubiquitinating enzyme 10 of Arabidopsis thaliana (Mouse-ear cress).